A 276-amino-acid chain; its full sequence is Nickel import system permease protein NikC (276 aa).

The next 5 membrane-spanning stretches (helical) occupy residues 10 to 30, 73 to 93, 108 to 128, 186 to 206, and 238 to 258; these read LIFFVFGAFIFVMIVLQFFVS, LFVTVLTLIAIVVIGVTLGLF, FIDVGLSIPEFIIVIALASFF, IIPAIIVLMVVDFGKIILYIS, and IMLIAPASVIAITILIFNLTG. The ABC transmembrane type-1 domain maps to 69–258; the sequence is ARSTLFVTVL…ITILIFNLTG (190 aa).

It belongs to the binding-protein-dependent transport system permease family. OppBC subfamily. The complex is composed of two ATP-binding proteins (NikD and NikE), two transmembrane proteins (NikB and NikC) and a solute-binding protein (NikA).

It localises to the cell membrane. In terms of biological role, part of the ABC transporter complex NikABCDE (Opp2) involved in nickel import. Probably responsible for the translocation of the substrate across the membrane. The protein is Nickel import system permease protein NikC of Staphylococcus aureus (strain bovine RF122 / ET3-1).